A 382-amino-acid polypeptide reads, in one-letter code: Norsolorinic acid reductase B (382 aa).

Asp64 contributes to the NADP(+) binding site. Tyr69 functions as the Proton donor in the catalytic mechanism. His143 contacts substrate. NADP(+)-binding positions include 173 to 174 (SD), Gln199, 228 to 238 (GVLNQGRFRTE), and 302 to 310 (RKVDHLTGV).

Belongs to the aldo/keto reductase family. Aldo/keto reductase 2 subfamily.

It functions in the pathway mycotoxin biosynthesis; aflatoxin biosynthesis. Norsolorinic acid reductase; part of the gene cluster that mediates the biosynthesis of aflatoxins, a group of polyketide-derived furanocoumarins, and part of the most toxic and carcinogenic compounds among the known mycotoxins. The four major aflatoxins produced by A.parasiticus are aflatoxin B1 (AFB1), aflatoxin B2 (AFB2), aflatoxin G1 (AFG1) and aflatoxin G2 (AFG2). Within the aflatoxin pathway, the norsolorinic acid reductase aflE may play a role in the conversion of norsolorinic acid (NOR) to averantin (AVN). The biosynthesis of aflatoxins begins with the norsolorinic acid synthase aflC that combines a hexanoyl starter unit produced by the fatty acid synthase aflA/aflB and 7 malonyl-CoA extender units to synthesize the precursor NOR. The second step is the conversion of NOR to averantin and requires the norsolorinic acid ketoreductase aflD, which catalyzes the dehydration of norsolorinic acid to form (1'S)-averantin. The norsolorinic acid reductases aflE and aflF may also play a role in the conversion of NOR to AVN. The cytochrome P450 monooxygenase aflG then catalyzes the hydroxylation of AVN to 5'hydroxyaverantin (HAVN). The next step is performed by the 5'-hydroxyaverantin dehydrogenase aflH that transforms HAVN to 5'-oxoaverantin (OAVN) which is further converted to averufin (AVF) by aflK that plays a dual role in the pathway, as a 5'-oxoaverantin cyclase that mediates conversion of 5'-oxoaverantin, as well as a versicolorin B synthase in a later step in the pathway. The averufin oxidase aflI catalyzes the conversion of AVF to versiconal hemiacetal acetate (VHA). VHA is then the substrate for the versiconal hemiacetal acetate esterase aflJ to yield versiconal (VAL). Versicolorin B synthase aflK then converts VAL to versicolorin B (VERB) by closing the bisfuran ring of aflatoxin which is required for DNA-binding, thus giving to aflatoxin its activity as a mutagen. Then, the activity of the versicolorin B desaturase aflL leads to versicolorin A (VERA). A branch point starts from VERB since it can also be converted to dihydrodemethylsterigmatocystin (DMDHST), probably also by aflL, VERA being a precursor for aflatoxins B1 and G1, and DMDHST for aflatoxins B2 and G2. Next, the versicolorin reductase aflM and the cytochrome P450 monooxygenase aflN are involved in conversion of VERA to demethylsterigmatocystin (DMST). AflX and aflY seem also involved in this step, through probable aflX-mediated epoxide ring-opening step following versicolorin A oxidation and aflY-mediated Baeyer-Villiger oxidation required for the formation of the xanthone ring. The methyltransferase aflO then leads to the modification of DMST to sterigmatocystin (ST), and of DMDHST to dihydrosterigmatocystin (DHST). Both ST and DHST are then substrates of the O-methyltransferase aflP to yield O-methylsterigmatocystin (OMST) and dihydro-O-methylsterigmatocystin (DHOMST), respectively. Finally OMST is converted to aflatoxins B1 and G1, and DHOMST to aflatoxins B2 and G2, via the action of several enzymes including O-methylsterigmatocystin oxidoreductase aflQ, the cytochrome P450 monooxygenase aflU, but also the NADH-dependent flavin oxidoreductase nadA which is specifically required for the synthesis of AFG1. The polypeptide is Norsolorinic acid reductase B (Aspergillus parasiticus (strain ATCC 56775 / NRRL 5862 / SRRC 143 / SU-1)).